The sequence spans 432 residues: Pachytene checkpoint protein 2 homolog (432 aa).

Met-1 carries the post-translational modification N-acetylmethionine. Residue 179-186 participates in ATP binding; sequence GPPGTGKT.

It belongs to the AAA ATPase family. PCH2 subfamily. As to quaternary structure, specifically interacts with the ligand binding domain of the thyroid receptor (TR). This interaction does not require the presence of thyroid hormone for its interaction. Interacts with proteasome subunit PSMA8; to participate in meiosis progression during spermatogenesis.

Its function is as follows. Plays a key role in chromosome recombination and chromosome structure development during meiosis. Required at early steps in meiotic recombination that leads to non-crossovers pathways. Also needed for efficient completion of homologous synapsis by influencing crossover distribution along the chromosomes affecting both crossovers and non-crossovers pathways. Also required for development of higher-order chromosome structures and is needed for synaptonemal-complex formation. In males, required for efficient synapsis of the sex chromosomes and for sex body formation. Promotes early steps of the DNA double-strand breaks (DSBs) repair process upstream of the assembly of RAD51 complexes. Required for depletion of HORMAD1 and HORMAD2 from synapsed chromosomes. Plays a role in mitotic spindle assembly checkpoint (SAC) activation. This chain is Pachytene checkpoint protein 2 homolog (Trip13), found in Rattus norvegicus (Rat).